Consider the following 203-residue polypeptide: ATP-dependent Clp protease proteolytic subunit (203 aa).

S107 functions as the Nucleophile in the catalytic mechanism. H132 is a catalytic residue.

It belongs to the peptidase S14 family. Fourteen ClpP subunits assemble into 2 heptameric rings which stack back to back to give a disk-like structure with a central cavity, resembling the structure of eukaryotic proteasomes.

The protein resides in the cytoplasm. The catalysed reaction is Hydrolysis of proteins to small peptides in the presence of ATP and magnesium. alpha-casein is the usual test substrate. In the absence of ATP, only oligopeptides shorter than five residues are hydrolyzed (such as succinyl-Leu-Tyr-|-NHMec, and Leu-Tyr-Leu-|-Tyr-Trp, in which cleavage of the -Tyr-|-Leu- and -Tyr-|-Trp bonds also occurs).. In terms of biological role, cleaves peptides in various proteins in a process that requires ATP hydrolysis. Has a chymotrypsin-like activity. Plays a major role in the degradation of misfolded proteins. The polypeptide is ATP-dependent Clp protease proteolytic subunit (Shewanella halifaxensis (strain HAW-EB4)).